Here is a 717-residue protein sequence, read N- to C-terminus: Polyribonucleotide nucleotidyltransferase (717 aa).

Residues D487 and D493 each contribute to the Mg(2+) site. The 60-residue stretch at P554–I613 folds into the KH domain. The region spanning G623–R691 is the S1 motif domain.

Belongs to the polyribonucleotide nucleotidyltransferase family. It depends on Mg(2+) as a cofactor.

The protein resides in the cytoplasm. It catalyses the reaction RNA(n+1) + phosphate = RNA(n) + a ribonucleoside 5'-diphosphate. In terms of biological role, involved in mRNA degradation. Catalyzes the phosphorolysis of single-stranded polyribonucleotides processively in the 3'- to 5'-direction. The protein is Polyribonucleotide nucleotidyltransferase of Acidiphilium cryptum (strain JF-5).